Consider the following 211-residue polypeptide: Regulator of G-protein signaling 2 (211 aa).

A necessary for membrane association region spans residues 32–66; sequence KMKRTLLKDWKTRLSYFLQNSSTPGKPKTGKKSKQ. A necessary to inhibit protein synthesis region spans residues 79 to 116; sequence LWAEAFDELLASKYGLAAFRAFLKSEFCEENIEFWLAC. The region spanning 83 to 199 is the RGS domain; the sequence is AFDELLASKY…LESEFYQDLC (117 aa).

Interacts with GNAQ. Does not interact with GNAI1 and GNAI3. Interacts with EIF2B5. Interacts with PRKG1 (isoform alpha). In terms of processing, phosphorylated by protein kinase C. Phosphorylation by PRKG1 leads to activation of RGS2 activity.

Its subcellular location is the cell membrane. The protein localises to the cytoplasm. It localises to the nucleus. It is found in the nucleolus. In terms of biological role, regulates G protein-coupled receptor signaling cascades. Inhibits signal transduction by increasing the GTPase activity of G protein alpha subunits, thereby driving them into their inactive GDP-bound form. It is involved in the negative regulation of the angiotensin-activated signaling pathway. Plays a role in the regulation of blood pressure in response to signaling via G protein-coupled receptors and GNAQ. Plays a role in regulating the constriction and relaxation of vascular smooth muscle. Binds EIF2B5 and blocks its activity, thereby inhibiting the translation of mRNA into protein. This is Regulator of G-protein signaling 2 (Rgs2) from Rattus norvegicus (Rat).